An 856-amino-acid chain; its full sequence is DNA mismatch repair protein MutS (856 aa).

609–616 serves as a coordination point for ATP; sequence GPNMSGKS.

Belongs to the DNA mismatch repair MutS family.

Its function is as follows. This protein is involved in the repair of mismatches in DNA. It is possible that it carries out the mismatch recognition step. This protein has a weak ATPase activity. This chain is DNA mismatch repair protein MutS, found in Finegoldia magna (strain ATCC 29328 / DSM 20472 / WAL 2508) (Peptostreptococcus magnus).